The sequence spans 118 residues: Putative pterin-4-alpha-carbinolamine dehydratase (118 aa).

The protein belongs to the pterin-4-alpha-carbinolamine dehydratase family.

It catalyses the reaction (4aS,6R)-4a-hydroxy-L-erythro-5,6,7,8-tetrahydrobiopterin = (6R)-L-erythro-6,7-dihydrobiopterin + H2O. The protein is Putative pterin-4-alpha-carbinolamine dehydratase of Pseudomonas putida (strain ATCC 700007 / DSM 6899 / JCM 31910 / BCRC 17059 / LMG 24140 / F1).